The following is a 517-amino-acid chain: Crotonobetaine/carnitine--CoA ligase (517 aa).

This sequence belongs to the ATP-dependent AMP-binding enzyme family.

The enzyme catalyses 4-(trimethylamino)butanoate + ATP + CoA = 4-(trimethylamino)butanoyl-CoA + AMP + diphosphate. It carries out the reaction crotonobetaine + ATP + CoA = crotonobetainyl-CoA + AMP + diphosphate. It catalyses the reaction (R)-carnitine + ATP + CoA = (R)-carnitinyl-CoA + AMP + diphosphate. The protein operates within amine and polyamine metabolism; carnitine metabolism. In terms of biological role, catalyzes the transfer of CoA to carnitine, generating the initial carnitinyl-CoA needed for the CaiB reaction cycle. Also has activity toward crotonobetaine and gamma-butyrobetaine. This is Crotonobetaine/carnitine--CoA ligase from Shigella sonnei (strain Ss046).